The primary structure comprises 266 residues: Phosphate import ATP-binding protein PstB 2 (266 aa).

The ABC transporter domain maps to 13–252 (LEAQGVNVYY…GPTEEIFQNP (240 aa)). An ATP-binding site is contributed by 45–52 (GPSGCGKS).

The protein belongs to the ABC transporter superfamily. Phosphate importer (TC 3.A.1.7) family. The complex is composed of two ATP-binding proteins (PstB), two transmembrane proteins (PstC and PstA) and a solute-binding protein (PstS).

Its subcellular location is the cell inner membrane. It carries out the reaction phosphate(out) + ATP + H2O = ADP + 2 phosphate(in) + H(+). In terms of biological role, part of the ABC transporter complex PstSACB involved in phosphate import. Responsible for energy coupling to the transport system. This Synechocystis sp. (strain ATCC 27184 / PCC 6803 / Kazusa) protein is Phosphate import ATP-binding protein PstB 2.